The chain runs to 418 residues: MLLPVPLLLGLLGLAAAEPVVYFKEQFLDGDGWTERWIESKHKSDFGKFVLSSGKFYGDQEKDKGLQTSQDARFYALSARFEPFSNKGQPLVVQFTVKHEQNIDCGGGYVKLFPAGLDQKDMHGDSEYNIMFGPDICGPGTKKVHVIFNYKGKNVLINKDIRCKDDEFTHLYTLIVRPDNTYEVKIDNSQVESGSLEDDWDFLPPKKIKDPDASKPEDWDERAKIDDPTDSKPEDWDKPEHIPDPDAKKPEDWDEEMDGEWEPPVIQNPEYKGEWKPRQIDNPDYKGTWIHPEIDNPEYSPDANIYAYDSFAVLGLDLWQVKSGTIFDNFLITNDEAYAEEFGNETWGVTKTAEKQMKDKQDEEQRLKEEEEEKKRKEEEEAEEDEEDKDDKEDEDEDEEDKDEEEEEAAAGQAKDEL.

The first 17 residues, 1 to 17 (MLLPVPLLLGLLGLAAA), serve as a signal peptide directing secretion. Residues 18 to 197 (EPVVYFKEQF…NSQVESGSLE (180 aa)) are N-domain. Ca(2+) is bound at residue Gln26. The residue at position 48 (Lys48) is an N6-acetyllysine. Positions 62 and 64 each coordinate Ca(2+). The residue at position 64 (Lys64) is an N6-(2-hydroxyisobutyryl)lysine. Cys105 and Cys137 are oxidised to a cystine. Tyr109, Lys111, Tyr128, and Asp135 together coordinate an alpha-D-glucoside. Residue Lys159 is modified to N6-acetyllysine. One copy of the 1-1 repeat lies at 191-202 (VESGSLEDDWDF). The 4 X approximate repeats stretch occupies residues 191–255 (VESGSLEDDW…DAKKPEDWDE (65 aa)). The disordered stretch occupies residues 193–277 (SGSLEDDWDF…NPEYKGEWKP (85 aa)). Positions 198–308 (DDWDFLPPKK…YSPDANIYAY (111 aa)) are P-domain. Over residues 207-251 (KIKDPDASKPEDWDERAKIDDPTDSKPEDWDKPEHIPDPDAKKPE) the composition is skewed to basic and acidic residues. An N6-acetyllysine modification is found at Lys209. 6 repeat units span residues 210-221 (DPDASKPEDWDE), 227-238 (DPTDSKPEDWDK), 244-255 (DPDAKKPEDWDE), 259-269 (GEWEPPVIQNP), 273-283 (GEWKPRQIDNP), and 287-297 (GTWIHPEIDNP). Positions 237-270 (DKPEHIPDPDAKKPEDWDEEMDGEWEPPVIQNPE) are interaction with PPIB. Residues 252-261 (DWDEEMDGEW) show a composition bias toward acidic residues. The 3 X approximate repeats stretch occupies residues 259-297 (GEWEPPVIQNPEYKGEWKPRQIDNPDYKGTWIHPEIDNP). A C-domain region spans residues 309–418 (DSFAVLGLDL…AAAGQAKDEL (110 aa)). Asp317 is a binding site for an alpha-D-glucoside. Residue Asp328 coordinates Ca(2+). Positions 349 to 418 (VTKTAEKQMK…AAAGQAKDEL (70 aa)) are disordered. Over residues 352–379 (TAEKQMKDKQDEEQRLKEEEEEKKRKEE) the composition is skewed to basic and acidic residues. Over residues 380–409 (EEAEEDEEDKDDKEDEDEDEEDKDEEEEEA) the composition is skewed to acidic residues. Residues 415-418 (KDEL) carry the Prevents secretion from ER motif.

It belongs to the calreticulin family. In terms of assembly, monomer. Component of an EIF2 complex at least composed of CELF1/CUGBP1, CALR, CALR3, EIF2S1, EIF2S2, HSP90B1 and HSPA5. Interacts with PDIA3/ERp57 and SPACA9. Interacts with TRIM21. Interacts with NR3C1. Interacts with PPIB. Interacts (via P-domain) with PDIA5. Interacts with CLCC1.

The protein resides in the endoplasmic reticulum lumen. It is found in the cytoplasm. It localises to the cytosol. Its subcellular location is the secreted. The protein localises to the extracellular space. The protein resides in the extracellular matrix. It is found in the cell surface. It localises to the sarcoplasmic reticulum lumen. Its subcellular location is the cytoplasmic vesicle. The protein localises to the secretory vesicle. The protein resides in the cortical granule. It is found in the cytolytic granule. In terms of biological role, calcium-binding chaperone that promotes folding, oligomeric assembly and quality control in the endoplasmic reticulum (ER) via the calreticulin/calnexin cycle. This lectin interacts transiently with almost all of the monoglucosylated glycoproteins that are synthesized in the ER. Interacts with the DNA-binding domain of NR3C1 and mediates its nuclear export. Involved in maternal gene expression regulation. May participate in oocyte maturation via the regulation of calcium homeostasis. Present in the cortical granules of non-activated oocytes, is exocytosed during the cortical reaction in response to oocyte activation and might participate in the block to polyspermy. In Oryctolagus cuniculus (Rabbit), this protein is Calreticulin (CALR).